A 221-amino-acid chain; its full sequence is ATP-dependent Clp protease proteolytic subunit 1, mitochondrial (221 aa).

A mitochondrion-targeting transit peptide spans 1–25 (MLRRLVTSSLSASRSMSASVQSRVG). S120 functions as the Nucleophile in the catalytic mechanism. Residue H145 is part of the active site.

It belongs to the peptidase S14 family. Tetradecamer that assembles into a two heptameric rings with a central cavity. In terms of tissue distribution, expressed in the intestine.

It is found in the mitochondrion matrix. It carries out the reaction Hydrolysis of proteins to small peptides in the presence of ATP and magnesium. alpha-casein is the usual test substrate. In the absence of ATP, only oligopeptides shorter than five residues are hydrolyzed (such as succinyl-Leu-Tyr-|-NHMec, and Leu-Tyr-Leu-|-Tyr-Trp, in which cleavage of the -Tyr-|-Leu- and -Tyr-|-Trp bonds also occurs).. Clp cleaves peptides in various proteins in a process that requires ATP hydrolysis. Clp may be responsible for a fairly general and central housekeeping function rather than for the degradation of specific substrates. This chain is ATP-dependent Clp protease proteolytic subunit 1, mitochondrial (clpp-1), found in Caenorhabditis elegans.